The chain runs to 994 residues: Valine--tRNA ligase (994 aa).

The 'HIGH' region motif lies at 43-53 (PNVTGTLHMGH). The segment at 332 to 356 (IASGATSDTTDTPSDSDASNASNQH) is disordered. Positions 333–353 (ASGATSDTTDTPSDSDASNAS) are enriched in low complexity. The 'KMSKS' region motif lies at 585-589 (KMSKS). An ATP-binding site is contributed by Lys588. Residues 691–713 (TAHSPAQHQAGQDGQDVPRTPQP) are disordered. The stretch at 928–994 (LIDVDAERAR…NGLRERRTTL (67 aa)) forms a coiled coil.

The protein belongs to the class-I aminoacyl-tRNA synthetase family. ValS type 1 subfamily. In terms of assembly, monomer.

The protein localises to the cytoplasm. The catalysed reaction is tRNA(Val) + L-valine + ATP = L-valyl-tRNA(Val) + AMP + diphosphate. Its function is as follows. Catalyzes the attachment of valine to tRNA(Val). As ValRS can inadvertently accommodate and process structurally similar amino acids such as threonine, to avoid such errors, it has a 'posttransfer' editing activity that hydrolyzes mischarged Thr-tRNA(Val) in a tRNA-dependent manner. The chain is Valine--tRNA ligase from Xylella fastidiosa (strain M23).